Here is a 224-residue protein sequence, read N- to C-terminus: Claudin-19 (224 aa).

Topologically, residues 1-7 are cytoplasmic; sequence MANSGLQ. The chain crosses the membrane as a helical span at residues 8 to 28; that stretch reads LLGYFLALGGWVGIIASTALP. Residues 29–81 lie on the Extracellular side of the membrane; sequence QWKQSSYAGDAIITAVGLYEGLWMSCASQSTGQVQCKLYDSLLALDGHIQSAR. Cysteines 54 and 64 form a disulfide. The helical transmembrane segment at 82 to 102 threads the bilayer; it reads ALMVVAVLLGFVAMVLSVVGM. Topologically, residues 103 to 117 are cytoplasmic; the sequence is KCTRVGDSNPIAKGR. Residues 118–138 form a helical membrane-spanning segment; that stretch reads VAIAGGALFILAGLCTLTAVS. Residues 139-160 are Extracellular-facing; that stretch reads WYATLVTQEFFNPSTPVNARYE. A helical transmembrane segment spans residues 161–181; the sequence is FGPALFVGWASAGLAVLGGSF. The Cytoplasmic segment spans residues 182 to 224; sequence LCCTCPEPERPNSSPQPYRPGPSAAAREPVVKLPASAKGPLGV. Residues 191 to 224 form a disordered region; the sequence is RPNSSPQPYRPGPSAAAREPVVKLPASAKGPLGV.

It belongs to the claudin family. As to quaternary structure, can form homo- and heteropolymeric tight junction strands. Interacts with other claudins including CLDN3, CLDN10, CLDN16 and CLDN18 with highest affinity for CLDN16. Interacts (via PDZ-binding motif TRV) with TJP1 (via PDZ domain).

It is found in the cell junction. Its subcellular location is the tight junction. It localises to the cell membrane. The enzyme catalyses Mg(2+)(in) = Mg(2+)(out). It carries out the reaction Ca(2+)(in) = Ca(2+)(out). The catalysed reaction is Na(+)(in) = Na(+)(out). It catalyses the reaction K(+)(in) = K(+)(out). The enzyme catalyses Rb(+)(in) = Rb(+)(out). It carries out the reaction Cs(+)(in) = Cs(+)(out). The catalysed reaction is Li(+)(in) = Li(+)(out). In terms of biological role, forms paracellular channels: coassembles with CLDN16 into tight junction strands with cation-selective channels through the strands, conveying epithelial permeability in a process known as paracellular tight junction permeability. Involved in the maintenance of ion gradients along the nephron. In the thick ascending limb (TAL) of Henle's loop, facilitates sodium paracellular permeability from the interstitial compartment to the lumen, contributing to the lumen-positive transepithelial potential that drives paracellular magnesium and calcium reabsorption. Forms paracellular barriers on its own. In the peripheral nervous system, represents a major constituent of the tight junctions in Schwann cells and contributes to electrical sealing. During retinal neurogenesis, may regulate the barrier properties of tight junctions in retinal pigment epithelium, required for proper retinal tissue differentiation and vision. This chain is Claudin-19, found in Homo sapiens (Human).